Here is a 193-residue protein sequence, read N- to C-terminus: Phosphoheptose isomerase (193 aa).

One can recognise an SIS domain in the interval 37 to 193 (LANAFKAGGK…QLIEKEMADQ (157 aa)). Residue 52–54 (NGG) participates in substrate binding. Positions 61 and 65 each coordinate Zn(2+). Substrate-binding positions include E65, 93–94 (ND), 119–121 (STS), S124, and Q172. Residues Q172 and H180 each contribute to the Zn(2+) site.

The protein belongs to the SIS family. GmhA subfamily. As to quaternary structure, homotetramer. The cofactor is Zn(2+).

The protein resides in the cytoplasm. It carries out the reaction 2 D-sedoheptulose 7-phosphate = D-glycero-alpha-D-manno-heptose 7-phosphate + D-glycero-beta-D-manno-heptose 7-phosphate. Its pathway is carbohydrate biosynthesis; D-glycero-D-manno-heptose 7-phosphate biosynthesis; D-glycero-alpha-D-manno-heptose 7-phosphate and D-glycero-beta-D-manno-heptose 7-phosphate from sedoheptulose 7-phosphate: step 1/1. Functionally, catalyzes the isomerization of sedoheptulose 7-phosphate in D-glycero-D-manno-heptose 7-phosphate. This chain is Phosphoheptose isomerase, found in Pectobacterium atrosepticum (strain SCRI 1043 / ATCC BAA-672) (Erwinia carotovora subsp. atroseptica).